A 408-amino-acid chain; its full sequence is S-adenosylmethionine synthase (408 aa).

Residue His-19 participates in ATP binding. Asp-21 serves as a coordination point for Mg(2+). Position 47 (Glu-47) interacts with K(+). Positions 60 and 104 each coordinate L-methionine. The segment at 104–114 is flexible loop; that stretch reads QSPEIASGVDH. ATP-binding positions include 185-187, 255-256, Asp-264, 270-271, Ala-287, and Lys-291; these read DAK, RF, and RK. Position 264 (Asp-264) interacts with L-methionine. Lys-295 lines the L-methionine pocket.

Belongs to the AdoMet synthase family. Homotetramer; dimer of dimers. It depends on Mg(2+) as a cofactor. The cofactor is K(+).

It is found in the cytoplasm. The catalysed reaction is L-methionine + ATP + H2O = S-adenosyl-L-methionine + phosphate + diphosphate. Its pathway is amino-acid biosynthesis; S-adenosyl-L-methionine biosynthesis; S-adenosyl-L-methionine from L-methionine: step 1/1. Catalyzes the formation of S-adenosylmethionine (AdoMet) from methionine and ATP. The overall synthetic reaction is composed of two sequential steps, AdoMet formation and the subsequent tripolyphosphate hydrolysis which occurs prior to release of AdoMet from the enzyme. This Deinococcus radiodurans (strain ATCC 13939 / DSM 20539 / JCM 16871 / CCUG 27074 / LMG 4051 / NBRC 15346 / NCIMB 9279 / VKM B-1422 / R1) protein is S-adenosylmethionine synthase.